A 166-amino-acid polypeptide reads, in one-letter code: Large ribosomal subunit protein uL10 (166 aa).

In terms of assembly, part of the ribosomal stalk of the 50S ribosomal subunit. The N-terminus interacts with L11 and 23S rRNA to form the base of the stalk. The C-terminus forms an elongated spine to which L12 dimers bind in a sequential fashion forming a pentameric L10(L12)2(L12)2 complex.

Its function is as follows. Forms part of the ribosomal stalk, playing a central role in the interaction of the ribosome with GTP-bound translation factors (such as IF-2, EF-Tu, EF-G and RF3). The polypeptide is Large ribosomal subunit protein uL10 (rplJ) (Bacillus subtilis (strain 168)).